The primary structure comprises 396 residues: Maltose/maltodextrin-binding periplasmic protein (396 aa).

A signal peptide spans 1–26; the sequence is MKIKTGARILALSALTTMMFSASALA.

Belongs to the bacterial solute-binding protein 1 family. In terms of assembly, the complex is composed of two ATP-binding proteins (MalK), two transmembrane proteins (MalG and MalF) and a solute-binding protein (MalE).

The protein resides in the periplasm. In terms of biological role, part of the ABC transporter complex MalEFGK involved in maltose/maltodextrin import. Binds maltose and higher maltodextrins. This chain is Maltose/maltodextrin-binding periplasmic protein (malE), found in Escherichia coli O157:H7.